The primary structure comprises 146 residues: Putative pre-16S rRNA nuclease (146 aa).

Belongs to the YqgF nuclease family.

It localises to the cytoplasm. Could be a nuclease involved in processing of the 5'-end of pre-16S rRNA. This is Putative pre-16S rRNA nuclease from Burkholderia thailandensis (strain ATCC 700388 / DSM 13276 / CCUG 48851 / CIP 106301 / E264).